Here is a 622-residue protein sequence, read N- to C-terminus: Protein FAM234B (622 aa).

The interval 1-68 (MATVLSRALK…EPDSDAEVAE (68 aa)) is disordered. At S16 the chain carries Phosphoserine. Position 26 is a phosphothreonine (T26). Phosphoserine occurs at positions 30, 33, and 62. The chain crosses the membrane as a helical span at residues 104-124 (TSVFLLTLGISMILVLLCAFL).

It belongs to the FAM234 family.

Its subcellular location is the membrane. It localises to the golgi outpost. The protein resides in the cytoplasm. It is found in the cytoskeleton. The protein localises to the microtubule organizing center. The chain is Protein FAM234B from Homo sapiens (Human).